The sequence spans 734 residues: Photosystem I P700 chlorophyll a apoprotein A2 (734 aa).

Helical transmembrane passes span 46-69 (IFAS…FHVA), 135-158 (LYTG…LHLQ), 175-199 (LNHH…HVAI), 273-291 (MAHH…GHMY), 330-353 (IHFQ…QHMY), 369-395 (AALY…IFFI), 417-439 (AIIS…LYVH), and 517-535 (FLVH…LILV). Positions 559 and 568 each coordinate [4Fe-4S] cluster. 2 consecutive transmembrane segments (helical) span residues 575-596 (AFYL…YWHW) and 643-665 (LSVW…MFLI). Residues histidine 654, methionine 662, and tyrosine 670 each contribute to the chlorophyll a site. A phylloquinone-binding site is contributed by tryptophan 671. The chain crosses the membrane as a helical span at residues 707–727 (LVGLAHFSVGYIFTYAAFLIA).

Belongs to the PsaA/PsaB family. As to quaternary structure, the PsaA/B heterodimer binds the P700 chlorophyll special pair and subsequent electron acceptors. PSI consists of a core antenna complex that captures photons, and an electron transfer chain that converts photonic excitation into a charge separation. The eukaryotic PSI reaction center is composed of at least 11 subunits. The cofactor is P700 is a chlorophyll a/chlorophyll a' dimer, A0 is one or more chlorophyll a, A1 is one or both phylloquinones and FX is a shared 4Fe-4S iron-sulfur center..

The protein resides in the plastid. It localises to the chloroplast thylakoid membrane. The catalysed reaction is reduced [plastocyanin] + hnu + oxidized [2Fe-2S]-[ferredoxin] = oxidized [plastocyanin] + reduced [2Fe-2S]-[ferredoxin]. In terms of biological role, psaA and PsaB bind P700, the primary electron donor of photosystem I (PSI), as well as the electron acceptors A0, A1 and FX. PSI is a plastocyanin-ferredoxin oxidoreductase, converting photonic excitation into a charge separation, which transfers an electron from the donor P700 chlorophyll pair to the spectroscopically characterized acceptors A0, A1, FX, FA and FB in turn. Oxidized P700 is reduced on the lumenal side of the thylakoid membrane by plastocyanin. The chain is Photosystem I P700 chlorophyll a apoprotein A2 from Helianthus annuus (Common sunflower).